A 599-amino-acid chain; its full sequence is Elongation factor 4 (599 aa).

Positions 5-187 (SHIRNFSIIA…ALVNGIPAPV (183 aa)) constitute a tr-type G domain. Residues 17–22 (DHGKST) and 134–137 (NKMD) contribute to the GTP site.

This sequence belongs to the TRAFAC class translation factor GTPase superfamily. Classic translation factor GTPase family. LepA subfamily.

The protein resides in the cell inner membrane. The enzyme catalyses GTP + H2O = GDP + phosphate + H(+). In terms of biological role, required for accurate and efficient protein synthesis under certain stress conditions. May act as a fidelity factor of the translation reaction, by catalyzing a one-codon backward translocation of tRNAs on improperly translocated ribosomes. Back-translocation proceeds from a post-translocation (POST) complex to a pre-translocation (PRE) complex, thus giving elongation factor G a second chance to translocate the tRNAs correctly. Binds to ribosomes in a GTP-dependent manner. The protein is Elongation factor 4 of Teredinibacter turnerae (strain ATCC 39867 / T7901).